Consider the following 359-residue polypeptide: Apelin receptor B (359 aa).

At 1 to 36 (MNAMDNMTADYSPDYFDDAVNSSMCEYDEWEPSYSL) the chain is on the extracellular side. Asn-6 and Asn-21 each carry an N-linked (GlcNAc...) asparagine glycan. Intrachain disulfides connect Cys-25-Cys-288 and Cys-107-Cys-186. The chain crosses the membrane as a helical span at residues 37–57 (IPVLYMLIFILGLTGNGVVIF). Topologically, residues 58–75 (TVWRAQSKRRAADVYIGN) are cytoplasmic. Residues 76–96 (LALADLTFVVTLPLWAVYTAL) traverse the membrane as a helical segment. Residues 97–108 (GYHWPFGVALCK) are Extracellular-facing. A helical transmembrane segment spans residues 109-129 (ISSYVVLLNMYASVFCLTCLS). The Cytoplasmic portion of the chain corresponds to 130 to 151 (LDRYMAIVHSLTSTQLRTRGHM). The helical transmembrane segment at 152-172 (RASLTAIWLLSGVLAAPTLLF) threads the bilayer. Topologically, residues 173–213 (RTTVYDVETNRTSCAMDFNLVVSQPGQETYWIAGLSISSTA) are extracellular. Asn-182 is a glycosylation site (N-linked (GlcNAc...) asparagine). Residues 214-234 (LGFLIPLLAMMVCYGFIGCTV) form a helical membrane-spanning segment. Topologically, residues 235–251 (TRHFNSLRKEDQRKRRL) are cytoplasmic. A helical transmembrane segment spans residues 252-272 (LKIITTLVVVFAACWMPFHVV). Topologically, residues 273–286 (KTMDALSYLNLAPD) are extracellular. Residues 287 to 307 (SCTFLNLLLLAHPYATCLAYV) form a helical membrane-spanning segment. Residues 308-359 (NSCLNPLLYAFFDLRFRSQCLCLLNLKKALHASPASSLSSQKTEAQSLATKV) are Cytoplasmic-facing.

Belongs to the G-protein coupled receptor 1 family. As to expression, mesendodermal expression at the blastoderm margin appears by 4.5 hpf. At early gastrulation, expression is maintained ventrolaterally while expression in dorsal cells and random deep cells declines. During gastrulation and segmentation, expression is maintained in adaxial, intermediate, and lateral plate mesoderm. During late segmentation, expressed in several regions including the forming heart. By 24 hpf, expressed in the dorsal aorta, caudal vein, and intersomitic blood vessels.

It is found in the cell membrane. Functionally, g protein-coupled receptor for peptide hormones apelin (apln) and apelin receptor early endogenous ligand (apela), that plays a role in the regulation of normal cardiovascular function and fluid homeostasis. When acting as apelin receptor, activates both G(i) protein pathway that inhibits adenylate cyclase activity, and the beta-arrestin pathway that promotes internalization of the receptor. Also functions as mechanoreceptor that is activated by pathological stimuli in a G-protein-independent fashion to induce beta-arrestin signaling, hence eliciting cardiac hypertrophy. However, the presence of apelin ligand blunts cardiac hypertrophic induction from APLNR/APJ on response to pathological stimuli. Plays a key role in early development such as gastrulation, blood vessels formation and heart morphogenesis by acting as a receptor for apela hormone, promoting endoderm and mesendoderm cell migration and regulating the migration of cells fated to become myocardial progenitors, respectively. Positively regulates angioblast migration toward the embryonic midline, i.e. the position of the future vessel formation, during vasculogenesis. May promote sinus venosus (SV)-derived endothelial cells migration into the developing heart to promote coronary blood vessel development. Required for cardiovascular development, particularly for intersomitic vein angiogenesis by acting as a receptor for apln hormone. Plays a role in various processes in adults such as regulation of blood vessel formation, blood pressure, heart contractility and heart failure. Acts redundantly with agtrl1a in heart development. Its function is as follows. G protein-coupled receptor for peptide hormones apelin (APLN) and apelin receptor early endogenous ligand (APELA/ELA), that plays a role in the regulation of normal cardiovascular function and fluid homeostasis. When acting as apelin receptor, activates both G(i) protein pathway that inhibits adenylate cyclase activity, and the beta-arrestin pathway that promotes internalization of the receptor. APLNR/APJ also functions as mechanoreceptor that is activated by pathological stimuli in a G-protein-independent fashion to induce beta-arrestin signaling, hence eliciting cardiac hypertrophy. Plays a key role in early development such as gastrulation, blood vessels formation and heart morphogenesis by acting as a APELA receptor. May promote angioblast migration toward the embryonic midline, i.e. the position of the future vessel formation, during vasculogenesis. Promotes sinus venosus (SV)-derived endothelial cells migration into the developing heart to promote coronary blood vessel development. Also plays a role in various processes in adults such as regulation of blood vessel formation, blood pressure, heart contractility and heart failure. The polypeptide is Apelin receptor B (aplnrb) (Danio rerio (Zebrafish)).